We begin with the raw amino-acid sequence, 62 residues long: Conotoxin Sr5.7 (62 aa).

An N-terminal signal peptide occupies residues 1-22; sequence MRCLPVFVILLLLIASAPSVDA. Residues 23–44 constitute a propeptide that is removed on maturation; that stretch reads QLKTKDDVPLASFHDNAKGTQH.

This sequence belongs to the conotoxin T superfamily. Post-translationally, contains 2 disulfide bonds that can be either 'C1-C3, C2-C4' or 'C1-C4, C2-C3', since these disulfide connectivities have been observed for conotoxins with cysteine framework V (for examples, see AC P0DQQ7 and AC P81755). As to expression, expressed by the venom duct.

It localises to the secreted. In Conus spurius (Alphabet cone), this protein is Conotoxin Sr5.7.